We begin with the raw amino-acid sequence, 166 residues long: Peptide methionine sulfoxide reductase MsrA (166 aa).

Residue Cys11 is part of the active site.

This sequence belongs to the MsrA Met sulfoxide reductase family.

The enzyme catalyses L-methionyl-[protein] + [thioredoxin]-disulfide + H2O = L-methionyl-(S)-S-oxide-[protein] + [thioredoxin]-dithiol. It catalyses the reaction [thioredoxin]-disulfide + L-methionine + H2O = L-methionine (S)-S-oxide + [thioredoxin]-dithiol. In terms of biological role, has an important function as a repair enzyme for proteins that have been inactivated by oxidation. Catalyzes the reversible oxidation-reduction of methionine sulfoxide in proteins to methionine. This chain is Peptide methionine sulfoxide reductase MsrA, found in Lachnoclostridium phytofermentans (strain ATCC 700394 / DSM 18823 / ISDg) (Clostridium phytofermentans).